We begin with the raw amino-acid sequence, 538 residues long: tRNA-2-methylthio-N(6)-dimethylallyladenosine synthase (538 aa).

Positions 1-23 are disordered; sequence MNEEQRLGRNGNTDAVSTKEAGS. The MTTase N-terminal domain maps to 95 to 213; the sequence is KKFLVRTYGC…LPHLLRNALF (119 aa). Cys104, Cys140, Cys174, Cys250, Cys254, and Cys257 together coordinate [4Fe-4S] cluster. The region spanning 236–466 is the Radical SAM core domain; that stretch reads REGKTQAWVN…NALVNDISAQ (231 aa). One can recognise a TRAM domain in the interval 469–532; it reads LEYQDKVVEV…TWSLNGEMVE (64 aa).

It belongs to the methylthiotransferase family. MiaB subfamily. Monomer. It depends on [4Fe-4S] cluster as a cofactor.

The protein localises to the cytoplasm. It carries out the reaction N(6)-dimethylallyladenosine(37) in tRNA + (sulfur carrier)-SH + AH2 + 2 S-adenosyl-L-methionine = 2-methylsulfanyl-N(6)-dimethylallyladenosine(37) in tRNA + (sulfur carrier)-H + 5'-deoxyadenosine + L-methionine + A + S-adenosyl-L-homocysteine + 2 H(+). Its function is as follows. Catalyzes the methylthiolation of N6-(dimethylallyl)adenosine (i(6)A), leading to the formation of 2-methylthio-N6-(dimethylallyl)adenosine (ms(2)i(6)A) at position 37 in tRNAs that read codons beginning with uridine. The polypeptide is tRNA-2-methylthio-N(6)-dimethylallyladenosine synthase (Halalkalibacterium halodurans (strain ATCC BAA-125 / DSM 18197 / FERM 7344 / JCM 9153 / C-125) (Bacillus halodurans)).